The primary structure comprises 521 residues: GMP synthase [glutamine-hydrolyzing] (521 aa).

The region spanning 5-197 (KILILDFGSQ…VLDICGAQPG (193 aa)) is the Glutamine amidotransferase type-1 domain. The active-site Nucleophile is Cys-81. Active-site residues include His-171 and Glu-173. A GMPS ATP-PPase domain is found at 198 to 390 (WTMPNYIEEA…LGLPREMVYR (193 aa)). 225–231 (SGGVDSS) is an ATP binding site.

Homodimer.

It catalyses the reaction XMP + L-glutamine + ATP + H2O = GMP + L-glutamate + AMP + diphosphate + 2 H(+). It functions in the pathway purine metabolism; GMP biosynthesis; GMP from XMP (L-Gln route): step 1/1. Catalyzes the synthesis of GMP from XMP. The protein is GMP synthase [glutamine-hydrolyzing] (guaA) of Neisseria meningitidis serogroup A / serotype 4A (strain DSM 15465 / Z2491).